Here is an 84-residue protein sequence, read N- to C-terminus: Putative membrane protein insertion efficiency factor (84 aa).

Positions 64 to 84 are disordered; sequence GGSGYDPPPPRHQPRKWKCEE. Over residues 75–84 the composition is skewed to basic residues; sequence HQPRKWKCEE.

It belongs to the UPF0161 family.

Its subcellular location is the cell inner membrane. Its function is as follows. Could be involved in insertion of integral membrane proteins into the membrane. In Caulobacter vibrioides (strain ATCC 19089 / CIP 103742 / CB 15) (Caulobacter crescentus), this protein is Putative membrane protein insertion efficiency factor.